A 296-amino-acid chain; its full sequence is Nitrogenase iron protein (296 aa).

10-17 (GKGGIGKS) is a binding site for ATP. Residue cysteine 98 participates in [4Fe-4S] cluster binding. The residue at position 101 (arginine 101) is an ADP-ribosylarginine; by dinitrogenase reductase ADP-ribosyltransferase. Cysteine 133 is a binding site for [4Fe-4S] cluster.

This sequence belongs to the NifH/BchL/ChlL family. As to quaternary structure, homodimer. It depends on [4Fe-4S] cluster as a cofactor. The reversible ADP-ribosylation of Arg-101 inactivates the nitrogenase reductase and regulates nitrogenase activity.

The catalysed reaction is N2 + 8 reduced [2Fe-2S]-[ferredoxin] + 16 ATP + 16 H2O = H2 + 8 oxidized [2Fe-2S]-[ferredoxin] + 2 NH4(+) + 16 ADP + 16 phosphate + 6 H(+). Its function is as follows. The key enzymatic reactions in nitrogen fixation are catalyzed by the nitrogenase complex, which has 2 components: the iron protein and the molybdenum-iron protein. The chain is Nitrogenase iron protein (nifH) from Alcaligenes faecalis.